The following is a 275-amino-acid chain: NH(3)-dependent NAD(+) synthetase (275 aa).

Residue 47–54 (GISGGQDS) participates in ATP binding. Residue D53 coordinates Mg(2+). R141 contributes to the deamido-NAD(+) binding site. T161 is a binding site for ATP. A Mg(2+)-binding site is contributed by E166. K174 and D181 together coordinate deamido-NAD(+). The ATP site is built by K190 and T212. 261-262 (HK) is a deamido-NAD(+) binding site.

It belongs to the NAD synthetase family. Homodimer.

The enzyme catalyses deamido-NAD(+) + NH4(+) + ATP = AMP + diphosphate + NAD(+) + H(+). Its pathway is cofactor biosynthesis; NAD(+) biosynthesis; NAD(+) from deamido-NAD(+) (ammonia route): step 1/1. Catalyzes the ATP-dependent amidation of deamido-NAD to form NAD. Uses ammonia as a nitrogen source. This chain is NH(3)-dependent NAD(+) synthetase, found in Lactiplantibacillus plantarum (strain ATCC BAA-793 / NCIMB 8826 / WCFS1) (Lactobacillus plantarum).